A 146-amino-acid chain; its full sequence is Small ribosomal subunit protein eS17 (146 aa).

It belongs to the eukaryotic ribosomal protein eS17 family. As to quaternary structure, component of the small ribosomal subunit (SSU). Mature N.crassa ribosomes consist of a small (40S) and a large (60S) subunit. The 40S small subunit contains 1 molecule of ribosomal RNA (18S rRNA) and at least 32 different proteins. The large 60S subunit contains 3 rRNA molecules (26S, 5.8S and 5S rRNA) and at least 42 different proteins.

The protein localises to the cytoplasm. Component of the ribosome, a large ribonucleoprotein complex responsible for the synthesis of proteins in the cell. The small ribosomal subunit (SSU) binds messenger RNAs (mRNAs) and translates the encoded message by selecting cognate aminoacyl-transfer RNA (tRNA) molecules. The large subunit (LSU) contains the ribosomal catalytic site termed the peptidyl transferase center (PTC), which catalyzes the formation of peptide bonds, thereby polymerizing the amino acids delivered by tRNAs into a polypeptide chain. The nascent polypeptides leave the ribosome through a tunnel in the LSU and interact with protein factors that function in enzymatic processing, targeting, and the membrane insertion of nascent chains at the exit of the ribosomal tunnel. In Neurospora crassa (strain ATCC 24698 / 74-OR23-1A / CBS 708.71 / DSM 1257 / FGSC 987), this protein is Small ribosomal subunit protein eS17 (rps-17).